The sequence spans 242 residues: Lactate utilization protein A 1 (242 aa).

It belongs to the LutA/YkgE family.

In terms of biological role, is involved in L-lactate degradation and allows cells to grow with lactate as the sole carbon source. This Bacillus anthracis (strain CDC 684 / NRRL 3495) protein is Lactate utilization protein A 1.